The sequence spans 228 residues: Deoxyguanosine kinase (228 aa).

Residue G8–S16 participates in ATP binding. Substrate-binding residues include E32, Y44, and Q55. D78 serves as the catalytic Proton acceptor. The substrate site is built by R79, D84, and E149.

The protein belongs to the DCK/DGK family. As to quaternary structure, heterodimer of a deoxyadenosine (DAK) and a deoxyguanosine kinase (DGK).

The enzyme catalyses 2'-deoxyguanosine + ATP = dGMP + ADP + H(+). Functionally, DGK/DAK plays an essential role in generating the deoxyribonucleotide precursors, dGTP and dATP, for DNA metabolism. This chain is Deoxyguanosine kinase, found in Lactobacillus acidophilus (strain ATCC 700396 / NCK56 / N2 / NCFM).